Consider the following 681-residue polypeptide: Peroxisomal acyl-coenzyme A oxidase 2 (681 aa).

Ser-3 and Ser-9 each carry phosphoserine. 6 positions are modified to N6-succinyllysine: Lys-66, Lys-137, Lys-303, Lys-453, Lys-561, and Lys-667. A Microbody targeting signal motif is present at residues 679–681; sequence HKM.

The protein belongs to the acyl-CoA oxidase family. In terms of assembly, homodimer. It depends on FAD as a cofactor. Most abundant in liver. Also expressed in kidney. Not present in any other tissues tested.

Its subcellular location is the peroxisome. The catalysed reaction is (25R)-3alpha,7alpha,12alpha-trihydroxy-5beta-cholestan-26-oyl-CoA + A + H2O = (24R,25R)-3alpha,7alpha,12alpha,24-tetrahydroxy-5beta-cholestan-26-oyl-CoA + AH2. The enzyme catalyses (25S)-3alpha,7alpha,12alpha-trihydroxy-5beta-cholestan-26-oyl-CoA + O2 = (24E)-3alpha,7alpha,12alpha-trihydroxy-5beta-cholest-24-en-26-oyl-CoA + H2O2. Oxidizes the CoA esters of the bile acid intermediates di- and tri-hydroxycoprostanic acids. Capable of oxidizing short as well as long chain 2-methyl branched fatty acids. This is Peroxisomal acyl-coenzyme A oxidase 2 from Rattus norvegicus (Rat).